The following is a 417-amino-acid chain: Serine hydroxymethyltransferase (417 aa).

(6S)-5,6,7,8-tetrahydrofolate-binding positions include L121 and G125–L127. Position 229 is an N6-(pyridoxal phosphate)lysine (K229). S355–F357 serves as a coordination point for (6S)-5,6,7,8-tetrahydrofolate.

This sequence belongs to the SHMT family. As to quaternary structure, homodimer. Pyridoxal 5'-phosphate serves as cofactor.

It is found in the cytoplasm. It catalyses the reaction (6R)-5,10-methylene-5,6,7,8-tetrahydrofolate + glycine + H2O = (6S)-5,6,7,8-tetrahydrofolate + L-serine. It participates in one-carbon metabolism; tetrahydrofolate interconversion. Its pathway is amino-acid biosynthesis; glycine biosynthesis; glycine from L-serine: step 1/1. Functionally, catalyzes the reversible interconversion of serine and glycine with tetrahydrofolate (THF) serving as the one-carbon carrier. This reaction serves as the major source of one-carbon groups required for the biosynthesis of purines, thymidylate, methionine, and other important biomolecules. Also exhibits THF-independent aldolase activity toward beta-hydroxyamino acids, producing glycine and aldehydes, via a retro-aldol mechanism. The sequence is that of Serine hydroxymethyltransferase from Shewanella sp. (strain W3-18-1).